A 462-amino-acid chain; its full sequence is L-seryl-tRNA(Sec) selenium transferase (462 aa).

Residue Lys-292 is modified to N6-(pyridoxal phosphate)lysine.

Belongs to the SelA family. Pyridoxal 5'-phosphate is required as a cofactor.

It localises to the cytoplasm. It catalyses the reaction L-seryl-tRNA(Sec) + selenophosphate + H(+) = L-selenocysteinyl-tRNA(Sec) + phosphate. The protein operates within aminoacyl-tRNA biosynthesis; selenocysteinyl-tRNA(Sec) biosynthesis; selenocysteinyl-tRNA(Sec) from L-seryl-tRNA(Sec) (bacterial route): step 1/1. In terms of biological role, converts seryl-tRNA(Sec) to selenocysteinyl-tRNA(Sec) required for selenoprotein biosynthesis. This is L-seryl-tRNA(Sec) selenium transferase from Geotalea daltonii (strain DSM 22248 / JCM 15807 / FRC-32) (Geobacter daltonii).